A 153-amino-acid polypeptide reads, in one-letter code: Putative pre-16S rRNA nuclease (153 aa).

The protein belongs to the YqgF nuclease family.

Its subcellular location is the cytoplasm. Its function is as follows. Could be a nuclease involved in processing of the 5'-end of pre-16S rRNA. In Prochlorococcus marinus (strain MIT 9215), this protein is Putative pre-16S rRNA nuclease.